We begin with the raw amino-acid sequence, 168 residues long: uncharacterized protein (168 aa).

A helical membrane pass occupies residues 36–56 (LNWWQLIVVVGIAISGIAAIA). Asn-74 is a glycosylation site (N-linked (GlcNAc...) asparagine; by host). The next 3 membrane-spanning stretches (helical) occupy residues 86-106 (FIIIIVLSCLAVVGGIILAWL), 115-135 (KLLTMGLTTGGILGILYALTI), and 143-163 (MVKLGISWVSLLAFVLLGFFI). Asn-164 is a glycosylation site (N-linked (GlcNAc...) asparagine; by host).

It localises to the membrane. This is an uncharacterized protein from Acanthamoeba polyphaga mimivirus (APMV).